Reading from the N-terminus, the 187-residue chain is Large ribosomal subunit protein bL17 (187 aa).

Residues 122–187 (PKVRSSRTST…EADAAEKSDK (66 aa)) form a disordered region. The span at 127–144 (SRTSTATAPAAAAPAAEA) shows a compositional bias: low complexity. Acidic residues-rich tracts occupy residues 145-157 (PAEE…EETD) and 165-180 (TPAE…VEAD).

This sequence belongs to the bacterial ribosomal protein bL17 family. In terms of assembly, part of the 50S ribosomal subunit. Contacts protein L32.

The sequence is that of Large ribosomal subunit protein bL17 from Clavibacter michiganensis subsp. michiganensis (strain NCPPB 382).